The following is a 266-amino-acid chain: HLA class II histocompatibility antigen, DR beta 5 chain (266 aa).

An N-terminal signal peptide occupies residues 1–29 (MVCLKLPGGSYMAKLTVTLMVLSSPLALA). The tract at residues 30–124 (GDTRPRFLQQ…GESFTVQRRV (95 aa)) is beta-1. Residues 30-227 (GDTRPRFLQQ…RAQSESAQSK (198 aa)) are Extracellular-facing. Disulfide bonds link Cys-44-Cys-108 and Cys-146-Cys-202. An N-linked (GlcNAc...) asparagine glycan is attached at Asn-48. The tract at residues 125 to 227 (EPKVTVYPAR…RAQSESAQSK (103 aa)) is beta-2. An Ig-like C1-type domain is found at 126-214 (PKVTVYPART…EHPSVTSPLT (89 aa)). A helical membrane pass occupies residues 228 to 248 (MLSGVGGFVLGLLFLGAGLFI). Residues 249 to 266 (YFKNQKGHSGLHPTGLVS) lie on the Cytoplasmic side of the membrane.

It belongs to the MHC class II family. As to quaternary structure, heterodimer of an alpha and a beta subunit; also referred as MHC class II molecule. In the endoplasmic reticulum (ER) it forms a heterononamer; 3 MHC class II molecules bind to a CD74 homotrimer (also known as invariant chain or HLA class II histocompatibility antigen gamma chain). In the endosomal/lysosomal system; CD74 undergoes sequential degradation by various proteases; leaving a small fragment termed CLIP on each MHC class II molecule. MHC class II molecule interacts with HLA_DM, and HLA_DO in B-cells, in order to release CLIP and facilitate the binding of antigenic peptides. Ubiquitinated by MARCH1 and MARCH8 at Lys-254 leading to down-regulation of MHC class II.

It is found in the cell membrane. It localises to the endoplasmic reticulum membrane. Its subcellular location is the golgi apparatus. The protein localises to the trans-Golgi network membrane. The protein resides in the endosome membrane. It is found in the lysosome membrane. It localises to the late endosome membrane. In terms of biological role, binds peptides derived from antigens that access the endocytic route of antigen presenting cells (APC) and presents them on the cell surface for recognition by the CD4 T-cells. The peptide binding cleft accommodates peptides of 10-30 residues. The peptides presented by MHC class II molecules are generated mostly by degradation of proteins that access the endocytic route, where they are processed by lysosomal proteases and other hydrolases. Exogenous antigens that have been endocytosed by the APC are thus readily available for presentation via MHC II molecules, and for this reason this antigen presentation pathway is usually referred to as exogenous. As membrane proteins on their way to degradation in lysosomes as part of their normal turn-over are also contained in the endosomal/lysosomal compartments, exogenous antigens must compete with those derived from endogenous components. Autophagy is also a source of endogenous peptides, autophagosomes constitutively fuse with MHC class II loading compartments. In addition to APCs, other cells of the gastrointestinal tract, such as epithelial cells, express MHC class II molecules and CD74 and act as APCs, which is an unusual trait of the GI tract. To produce a MHC class II molecule that presents an antigen, three MHC class II molecules (heterodimers of an alpha and a beta chain) associate with a CD74 trimer in the ER to form a heterononamer. Soon after the entry of this complex into the endosomal/lysosomal system where antigen processing occurs, CD74 undergoes a sequential degradation by various proteases, including CTSS and CTSL, leaving a small fragment termed CLIP (class-II-associated invariant chain peptide). The removal of CLIP is facilitated by HLA-DM via direct binding to the alpha-beta-CLIP complex so that CLIP is released. HLA-DM stabilizes MHC class II molecules until primary high affinity antigenic peptides are bound. The MHC II molecule bound to a peptide is then transported to the cell membrane surface. In B-cells, the interaction between HLA-DM and MHC class II molecules is regulated by HLA-DO. Primary dendritic cells (DCs) also to express HLA-DO. Lysosomal microenvironment has been implicated in the regulation of antigen loading into MHC II molecules, increased acidification produces increased proteolysis and efficient peptide loading. In Homo sapiens (Human), this protein is HLA class II histocompatibility antigen, DR beta 5 chain.